Reading from the N-terminus, the 590-residue chain is Aspartate--tRNA(Asp/Asn) ligase (590 aa).

Residue E175 coordinates L-aspartate. The tract at residues 199 to 202 (QQYK) is aspartate. R221 and H450 together coordinate L-aspartate. 221-223 (RDE) lines the ATP pocket. Position 484 (E484) interacts with ATP. Residue R491 coordinates L-aspartate. 536 to 539 (GIDR) is an ATP binding site.

This sequence belongs to the class-II aminoacyl-tRNA synthetase family. Type 1 subfamily. As to quaternary structure, homodimer.

The protein resides in the cytoplasm. It carries out the reaction tRNA(Asx) + L-aspartate + ATP = L-aspartyl-tRNA(Asx) + AMP + diphosphate. Aspartyl-tRNA synthetase with relaxed tRNA specificity since it is able to aspartylate not only its cognate tRNA(Asp) but also tRNA(Asn). Reaction proceeds in two steps: L-aspartate is first activated by ATP to form Asp-AMP and then transferred to the acceptor end of tRNA(Asp/Asn). In Azorhizobium caulinodans (strain ATCC 43989 / DSM 5975 / JCM 20966 / LMG 6465 / NBRC 14845 / NCIMB 13405 / ORS 571), this protein is Aspartate--tRNA(Asp/Asn) ligase.